The following is a 250-amino-acid chain: Prolactin-7A2 (250 aa).

A signal peptide spans 1–29 (MQLSFSRPRPWTLLLMVVSNLLLWENVSS). 4 N-linked (GlcNAc...) asparagine glycosylation sites follow: Asn-26, Asn-35, Asn-102, and Asn-134. Cystine bridges form between Cys-100-Cys-215 and Cys-232-Cys-241.

The protein belongs to the somatotropin/prolactin family. Expression restricted to placental tissues. Trophoblast giant cells are found to be the major source.

The protein resides in the secreted. This chain is Prolactin-7A2 (Prl7a2), found in Rattus norvegicus (Rat).